Reading from the N-terminus, the 100-residue chain is Large ribosomal subunit protein uL23 (100 aa).

It belongs to the universal ribosomal protein uL23 family. Part of the 50S ribosomal subunit. Contacts protein L29, and trigger factor when it is bound to the ribosome.

Its function is as follows. One of the early assembly proteins it binds 23S rRNA. One of the proteins that surrounds the polypeptide exit tunnel on the outside of the ribosome. Forms the main docking site for trigger factor binding to the ribosome. The polypeptide is Large ribosomal subunit protein uL23 (Shewanella amazonensis (strain ATCC BAA-1098 / SB2B)).